Consider the following 178-residue polypeptide: Cytochrome b6-f complex iron-sulfur subunit (178 aa).

Residues Leu20 to Met42 form a helical membrane-spanning segment. Residues Lys65–Val161 enclose the Rieske domain. 4 residues coordinate [2Fe-2S] cluster: Cys107, His109, Cys125, and His128. Cys112 and Cys127 are oxidised to a cystine.

Belongs to the Rieske iron-sulfur protein family. In terms of assembly, the 4 large subunits of the cytochrome b6-f complex are cytochrome b6, subunit IV (17 kDa polypeptide, PetD), cytochrome f and the Rieske protein, while the 4 small subunits are PetG, PetL, PetM and PetN. The complex functions as a dimer. Requires [2Fe-2S] cluster as cofactor.

The protein localises to the cellular thylakoid membrane. It carries out the reaction 2 oxidized [plastocyanin] + a plastoquinol + 2 H(+)(in) = 2 reduced [plastocyanin] + a plastoquinone + 4 H(+)(out). In terms of biological role, component of the cytochrome b6-f complex, which mediates electron transfer between photosystem II (PSII) and photosystem I (PSI), cyclic electron flow around PSI, and state transitions. In Prochlorococcus marinus (strain AS9601), this protein is Cytochrome b6-f complex iron-sulfur subunit.